The sequence spans 307 residues: 4-hydroxy-3-methylbut-2-enyl diphosphate reductase (307 aa).

[4Fe-4S] cluster is bound at residue C13. (2E)-4-hydroxy-3-methylbut-2-enyl diphosphate-binding residues include H42 and H75. Residues H42 and H75 each contribute to the dimethylallyl diphosphate site. Positions 42 and 75 each coordinate isopentenyl diphosphate. [4Fe-4S] cluster is bound at residue C97. H125 lines the (2E)-4-hydroxy-3-methylbut-2-enyl diphosphate pocket. H125 provides a ligand contact to dimethylallyl diphosphate. H125 is a binding site for isopentenyl diphosphate. E127 functions as the Proton donor in the catalytic mechanism. T165 is a binding site for (2E)-4-hydroxy-3-methylbut-2-enyl diphosphate. C195 provides a ligand contact to [4Fe-4S] cluster. (2E)-4-hydroxy-3-methylbut-2-enyl diphosphate-binding residues include S223, S224, N225, and S267. Dimethylallyl diphosphate contacts are provided by S223, S224, N225, and S267. The isopentenyl diphosphate site is built by S223, S224, N225, and S267.

The protein belongs to the IspH family. It depends on [4Fe-4S] cluster as a cofactor.

The catalysed reaction is isopentenyl diphosphate + 2 oxidized [2Fe-2S]-[ferredoxin] + H2O = (2E)-4-hydroxy-3-methylbut-2-enyl diphosphate + 2 reduced [2Fe-2S]-[ferredoxin] + 2 H(+). It carries out the reaction dimethylallyl diphosphate + 2 oxidized [2Fe-2S]-[ferredoxin] + H2O = (2E)-4-hydroxy-3-methylbut-2-enyl diphosphate + 2 reduced [2Fe-2S]-[ferredoxin] + 2 H(+). The protein operates within isoprenoid biosynthesis; dimethylallyl diphosphate biosynthesis; dimethylallyl diphosphate from (2E)-4-hydroxy-3-methylbutenyl diphosphate: step 1/1. It participates in isoprenoid biosynthesis; isopentenyl diphosphate biosynthesis via DXP pathway; isopentenyl diphosphate from 1-deoxy-D-xylulose 5-phosphate: step 6/6. Functionally, catalyzes the conversion of 1-hydroxy-2-methyl-2-(E)-butenyl 4-diphosphate (HMBPP) into a mixture of isopentenyl diphosphate (IPP) and dimethylallyl diphosphate (DMAPP). Acts in the terminal step of the DOXP/MEP pathway for isoprenoid precursor biosynthesis. This Chlamydia trachomatis serovar D (strain ATCC VR-885 / DSM 19411 / UW-3/Cx) protein is 4-hydroxy-3-methylbut-2-enyl diphosphate reductase.